The sequence spans 191 residues: Peptidyl-tRNA hydrolase (191 aa).

A tRNA-binding site is contributed by tyrosine 16. Catalysis depends on histidine 21, which acts as the Proton acceptor. TRNA contacts are provided by tyrosine 67, asparagine 69, and asparagine 115.

The protein belongs to the PTH family. In terms of assembly, monomer.

It is found in the cytoplasm. The catalysed reaction is an N-acyl-L-alpha-aminoacyl-tRNA + H2O = an N-acyl-L-amino acid + a tRNA + H(+). In terms of biological role, hydrolyzes ribosome-free peptidyl-tRNAs (with 1 or more amino acids incorporated), which drop off the ribosome during protein synthesis, or as a result of ribosome stalling. Catalyzes the release of premature peptidyl moieties from peptidyl-tRNA molecules trapped in stalled 50S ribosomal subunits, and thus maintains levels of free tRNAs and 50S ribosomes. The polypeptide is Peptidyl-tRNA hydrolase (Wigglesworthia glossinidia brevipalpis).